We begin with the raw amino-acid sequence, 934 residues long: Desmocollin 2-like protein (934 aa).

Cadherin domains follow at residues 167-274, 274-381, 382-494, and 495-600; these read RWRP…APEF, FTGN…PPTF, KEKL…GPEF, and NPNI…IPVI. Topologically, residues 167–716 are extracellular; it reads RWRPLPFSVV…SASVSLGNYG (550 aa). 3 N-linked (GlcNAc...) asparagine glycosylation sites follow: asparagine 197, asparagine 296, and asparagine 316. N-linked (GlcNAc...) asparagine glycans are attached at residues asparagine 509, asparagine 565, and asparagine 569. A helical transmembrane segment spans residues 717-737; that stretch reads ILALVLSGLLLLLLCLFLIFF. Topologically, residues 738 to 934 are cytoplasmic; that stretch reads CTTKRDKLQI…ICYTTNKTGK (197 aa).

Expressed at low levels in the brain and heart.

It is found in the cell junction. Its subcellular location is the desmosome. The protein resides in the cell membrane. A component of desmosome cell-cell junctions which are required for positive regulation of cellular adhesion. Involved in the interaction of plaque proteins and intermediate filaments mediating cell-cell adhesion. Involved in the formation and structural organization of desmosome cell-cell junctions during embryonic development. Required for embryogenesis, specifically for progression of epiboly and normal convergence-extension movements during gastrulation. Required for the development of desmosomal-rich midlines in the heart. Plays an important role in ventricular contraction and resulting heart stroke volume. The polypeptide is Desmocollin 2-like protein (Danio rerio (Zebrafish)).